The sequence spans 142 residues: Sec-independent protein translocase protein TatB (142 aa).

Residues 1 to 21 form a helical membrane-spanning segment; sequence MFDIGASELLVLVIVAIVVIG. Residues 75-142 form a disordered region; sequence RETAAQETAA…PAARPGSQQP (68 aa). Positions 76–94 are enriched in low complexity; sequence ETAAQETAAAQGQTPAAAE. Positions 123–133 are enriched in basic and acidic residues; sequence AKVEARVEEAP.

Belongs to the TatB family. In terms of assembly, the Tat system comprises two distinct complexes: a TatABC complex, containing multiple copies of TatA, TatB and TatC subunits, and a separate TatA complex, containing only TatA subunits. Substrates initially bind to the TatABC complex, which probably triggers association of the separate TatA complex to form the active translocon.

Its subcellular location is the cell inner membrane. Part of the twin-arginine translocation (Tat) system that transports large folded proteins containing a characteristic twin-arginine motif in their signal peptide across membranes. Together with TatC, TatB is part of a receptor directly interacting with Tat signal peptides. TatB may form an oligomeric binding site that transiently accommodates folded Tat precursor proteins before their translocation. The chain is Sec-independent protein translocase protein TatB from Novosphingobium aromaticivorans (strain ATCC 700278 / DSM 12444 / CCUG 56034 / CIP 105152 / NBRC 16084 / F199).